Reading from the N-terminus, the 178-residue chain is Methylmalonyl-CoA epimerase, mitochondrial (178 aa).

The transit peptide at 1-38 (MRRVVKAAALAAGATGLFSRVQTSVAIGRSFSTPQSQF) directs the protein to the mitochondrion. The VOC domain occupies 49 to 178 (RLNHVAVAVP…GGVLVELEQA (130 aa)). Residue histidine 52 coordinates Co(2+). At lysine 116 the chain carries N6-succinyllysine. Residue histidine 124 participates in Co(2+) binding. Lysine 152 carries the post-translational modification N6-acetyllysine; alternate. The residue at position 152 (lysine 152) is an N6-succinyllysine; alternate. Residue glutamate 174 coordinates Co(2+).

The protein belongs to the methylmalonyl-CoA epimerase family.

Its subcellular location is the mitochondrion. It carries out the reaction (R)-methylmalonyl-CoA = (S)-methylmalonyl-CoA. Methylmalonyl-CoA epimerase involved in propionyl-CoA metabolism. The sequence is that of Methylmalonyl-CoA epimerase, mitochondrial from Mus musculus (Mouse).